A 318-amino-acid polypeptide reads, in one-letter code: Acetyl-coenzyme A carboxylase carboxyl transferase subunit alpha (318 aa).

The CoA carboxyltransferase C-terminal domain occupies 34-295 (DIEDQISQLR…KQAIKKDLSE (262 aa)).

It belongs to the AccA family. In terms of assembly, acetyl-CoA carboxylase is a heterohexamer composed of biotin carboxyl carrier protein (AccB), biotin carboxylase (AccC) and two subunits each of ACCase subunit alpha (AccA) and ACCase subunit beta (AccD).

The protein localises to the cytoplasm. It carries out the reaction N(6)-carboxybiotinyl-L-lysyl-[protein] + acetyl-CoA = N(6)-biotinyl-L-lysyl-[protein] + malonyl-CoA. The protein operates within lipid metabolism; malonyl-CoA biosynthesis; malonyl-CoA from acetyl-CoA: step 1/1. Component of the acetyl coenzyme A carboxylase (ACC) complex. First, biotin carboxylase catalyzes the carboxylation of biotin on its carrier protein (BCCP) and then the CO(2) group is transferred by the carboxyltransferase to acetyl-CoA to form malonyl-CoA. This Colwellia psychrerythraea (strain 34H / ATCC BAA-681) (Vibrio psychroerythus) protein is Acetyl-coenzyme A carboxylase carboxyl transferase subunit alpha.